Consider the following 975-residue polypeptide: E3 ubiquitin-protein ligase BRE1A (975 aa).

Positions 1–30 (MSGIGNKRAAGEPGTSMPPEKKAAVEDSGT) are disordered. An N6-acetyllysine modification is found at lysine 21. Serine 41 is subject to Phosphoserine. Residues 43–90 (TEELDIRTLQTKNRKLAEMLDQRQAIEDELREHIEKLERRQATDDASL) adopt a coiled-coil conformation. The disordered stretch occupies residues 125-155 (KALVVPEPEPDSDSNQERKDDRERGEGQEPA). 2 positions are modified to phosphoserine: serine 136 and serine 138. Over residues 139-151 (NQERKDDRERGEG) the composition is skewed to basic and acidic residues. Coiled-coil stretches lie at residues 168–375 (EEME…EQVV) and 429–898 (SLHK…TTKK). Residues lysine 348 and lysine 510 each carry the N6-acetyllysine modification. Positions 507 to 622 (DLNKTRLRSG…GKHDDGRKKE (116 aa)) are disordered. At serine 522 the chain carries Phosphoserine. Positions 527-540 (EDPKDEPAELKPDS) are enriched in basic and acidic residues. Positions 543–552 (LSSQSSASKA) are enriched in low complexity. The span at 558–622 (NEIKSKRDEE…GKHDDGRKKE (65 aa)) shows a compositional bias: basic and acidic residues. Residue serine 562 is modified to Phosphoserine. The segment at 922 to 961 (CPCCNMRKKDAVLTKCFHVFCFECVKTRYDTRQRKCPKCN) adopts an RING-type zinc-finger fold.

It belongs to the BRE1 family. As to quaternary structure, component of the RNF20/40 complex (also known as BRE1 complex) probably composed of 2 copies of RNF20/BRE1A and 2 copies of RNF40/BRE1B. Interacts with UBE2E1/UBCH6. Interacts with p53/TP53 and WAC. Interacts with PAF1; the interaction mediates the association of the PAF1 and RNF20/40 complexes which is a prerequsite for recruitment of UBE2A/B. Interacts with isoform 1 and isoform 2 of PA2G4. Interacts with FBXL19. In terms of assembly, (Microbial infection) Interacts with human herpesvirus 8 (KSHV) protein RTA/ORF50; this interaction targets the SMC5-SMC6 complex for proteasomal degradation. As to expression, expressed in the normal brain and also in malignant gliomas (at protein level).

It is found in the nucleus. It carries out the reaction S-ubiquitinyl-[E2 ubiquitin-conjugating enzyme]-L-cysteine + [acceptor protein]-L-lysine = [E2 ubiquitin-conjugating enzyme]-L-cysteine + N(6)-ubiquitinyl-[acceptor protein]-L-lysine.. Its pathway is protein modification; protein ubiquitination. Component of the RNF20/40 E3 ubiquitin-protein ligase complex that mediates monoubiquitination of 'Lys-120' of histone H2B (H2BK120ub1). H2BK120ub1 gives a specific tag for epigenetic transcriptional activation and is also prerequisite for histone H3 'Lys-4' and 'Lys-79' methylation (H3K4me and H3K79me, respectively). It thereby plays a central role inb histone code and gene regulation. The RNF20/40 complex forms a H2B ubiquitin ligase complex in cooperation with the E2 enzyme UBE2A or UBE2B; reports about the cooperation with UBE2E1/UBCH are contradictory. Required for transcriptional activation of Hox genes. Recruited to the MDM2 promoter, probably by being recruited by p53/TP53, and thereby acts as a transcriptional coactivator. Mediates the polyubiquitination of isoform 2 of PA2G4 in cancer cells leading to its proteasome-mediated degradation. In terms of biological role, (Microbial infection) Promotes the human herpesvirus 8 (KSHV) lytic cycle by inducing the expression of lytic viral genes including the latency switch gene RTA/ORF50. The chain is E3 ubiquitin-protein ligase BRE1A (RNF20) from Homo sapiens (Human).